Consider the following 128-residue polypeptide: Large ribosomal subunit protein bL12 (128 aa).

The protein belongs to the bacterial ribosomal protein bL12 family. In terms of assembly, homodimer. Part of the ribosomal stalk of the 50S ribosomal subunit. Forms a multimeric L10(L12)X complex, where L10 forms an elongated spine to which 2 to 4 L12 dimers bind in a sequential fashion. Binds GTP-bound translation factors.

Functionally, forms part of the ribosomal stalk which helps the ribosome interact with GTP-bound translation factors. Is thus essential for accurate translation. This chain is Large ribosomal subunit protein bL12, found in Thermosipho africanus (strain TCF52B).